We begin with the raw amino-acid sequence, 349 residues long: Probable L-asparaginase periplasmic (349 aa).

Positions 1–21 (MKLTKLALCTLFGLGVSIANA) are cleaved as a signal peptide. The 325-residue stretch at 25-349 (PNITILATGG…KVIQQYFEDF (325 aa)) folds into the Asparaginase/glutaminase domain. The active-site O-isoaspartyl threonine intermediate is Thr35. Substrate is bound by residues Ser81 and 112–113 (TD). Cys100 and Cys128 are oxidised to a cystine.

It belongs to the asparaginase 1 family.

The protein resides in the periplasm. It catalyses the reaction L-asparagine + H2O = L-aspartate + NH4(+). The chain is Probable L-asparaginase periplasmic (ansB) from Haemophilus influenzae (strain ATCC 51907 / DSM 11121 / KW20 / Rd).